Reading from the N-terminus, the 66-residue chain is DNA-directed RNA polymerase subunit Rpo10 (66 aa).

Positions 7, 10, 44, and 45 each coordinate Zn(2+).

It belongs to the archaeal Rpo10/eukaryotic RPB10 RNA polymerase subunit family. As to quaternary structure, part of the RNA polymerase complex. It depends on Zn(2+) as a cofactor.

It is found in the cytoplasm. The catalysed reaction is RNA(n) + a ribonucleoside 5'-triphosphate = RNA(n+1) + diphosphate. Its function is as follows. DNA-dependent RNA polymerase (RNAP) catalyzes the transcription of DNA into RNA using the four ribonucleoside triphosphates as substrates. The sequence is that of DNA-directed RNA polymerase subunit Rpo10 from Hyperthermus butylicus (strain DSM 5456 / JCM 9403 / PLM1-5).